Consider the following 94-residue polypeptide: Co-chaperonin GroES (94 aa).

This sequence belongs to the GroES chaperonin family. In terms of assembly, heptamer of 7 subunits arranged in a ring. Interacts with the chaperonin GroEL.

It is found in the cytoplasm. In terms of biological role, together with the chaperonin GroEL, plays an essential role in assisting protein folding. The GroEL-GroES system forms a nano-cage that allows encapsulation of the non-native substrate proteins and provides a physical environment optimized to promote and accelerate protein folding. GroES binds to the apical surface of the GroEL ring, thereby capping the opening of the GroEL channel. In Geobacillus thermodenitrificans (strain NG80-2), this protein is Co-chaperonin GroES.